The primary structure comprises 692 residues: Protein arginine N-methyltransferase 7 (692 aa).

SAM-dependent MTase PRMT-type domains lie at 14 to 345 (SVEW…YCVW) and 358 to 684 (RVRQ…IIME). At arginine 32 the chain carries Omega-N-methylarginine. Residues glutamate 144 and glutamate 153 contribute to the active site.

It belongs to the class I-like SAM-binding methyltransferase superfamily. Protein arginine N-methyltransferase family. PRMT7 subfamily. Homodimer and heterodimer. Interacts with CTCFL. Interacts with PRMT5 and SNRPD3.

The protein localises to the cytoplasm. It is found in the cytosol. Its subcellular location is the nucleus. It carries out the reaction L-arginyl-[protein] + S-adenosyl-L-methionine = N(omega)-methyl-L-arginyl-[protein] + S-adenosyl-L-homocysteine + H(+). Arginine methyltransferase that can both catalyze the formation of omega-N monomethylarginine (MMA) and symmetrical dimethylarginine (sDMA), with a preference for the formation of MMA. Specifically mediates the symmetrical dimethylation of arginine residues in the small nuclear ribonucleoproteins Sm D1 (SNRPD1) and Sm D3 (SNRPD3); such methylation being required for the assembly and biogenesis of snRNP core particles. Specifically mediates the symmetric dimethylation of histone H4 'Arg-3' to form H4R3me2s. Plays a role in gene imprinting by being recruited by CTCFL at the H19 imprinted control region (ICR) and methylating histone H4 to form H4R3me2s, possibly leading to recruit DNA methyltransferases at these sites. May also play a role in embryonic stem cell (ESC) pluripotency. Also able to mediate the arginine methylation of histone H2A and myelin basic protein (MBP) in vitro; the relevance of such results is however unclear in vivo. This Homo sapiens (Human) protein is Protein arginine N-methyltransferase 7 (PRMT7).